Here is an 81-residue protein sequence, read N- to C-terminus: Conotoxin ArMKLT2-0311 (81 aa).

The first 22 residues, 1-22 (MKLTCVLIVALLFLTACQLTTA), serve as a signal peptide directing secretion. Basic and acidic residues predominate over residues 23–34 (DDSRDKQEDPLV). Residues 23–45 (DDSRDKQEDPLVRSHRKMQKSED) form a disordered region. Positions 23-51 (DDSRDKQEDPLVRSHRKMQKSEDPKMAER) are excised as a propeptide. Intrachain disulfides connect cysteine 52/cysteine 67, cysteine 59/cysteine 71, and cysteine 66/cysteine 80.

Belongs to the conotoxin O1 superfamily. As to expression, expressed by the venom duct.

It is found in the secreted. This chain is Conotoxin ArMKLT2-0311, found in Conus arenatus (Sand-dusted cone).